Reading from the N-terminus, the 201-residue chain is Prostamide/prostaglandin F synthase (201 aa).

Belongs to the peroxiredoxin-like PRXL2 family. Prostamide/prostaglandin F synthase subfamily.

It localises to the cytoplasm. It is found in the cytosol. The enzyme catalyses prostaglandin H2 + [thioredoxin]-dithiol = prostaglandin F2alpha + [thioredoxin]-disulfide. It catalyses the reaction prostamide F2alpha + [thioredoxin]-disulfide = prostamide H2 + [thioredoxin]-dithiol. Functionally, catalyzes the reduction of prostaglandin-ethanolamide H(2) (prostamide H(2)) to prostamide F(2alpha) with NADPH as proton donor. Also able to reduce prostaglandin H(2) to prostaglandin F(2alpha). The polypeptide is Prostamide/prostaglandin F synthase (prxl2b) (Xenopus tropicalis (Western clawed frog)).